A 285-amino-acid polypeptide reads, in one-letter code: Protein unc-1 (285 aa).

A run of 2 helical transmembrane segments spans residues 27 to 47 (IGTI…IVTF) and 69 to 89 (IGRL…IPCI).

It belongs to the band 7/mec-2 family.

The protein localises to the cell membrane. It localises to the cell junction. Its subcellular location is the gap junction. This is Protein unc-1 (unc-1) from Caenorhabditis elegans.